A 92-amino-acid polypeptide reads, in one-letter code: Small ribosomal subunit protein uS19 (92 aa).

It belongs to the universal ribosomal protein uS19 family.

Its function is as follows. Protein S19 forms a complex with S13 that binds strongly to the 16S ribosomal RNA. The chain is Small ribosomal subunit protein uS19 from Geobacillus kaustophilus (strain HTA426).